A 274-amino-acid chain; its full sequence is 3-methyl-2-oxobutanoate hydroxymethyltransferase (274 aa).

Mg(2+)-binding residues include D49 and D88. Residues 49-50 (DS), D88, and K118 each bind 3-methyl-2-oxobutanoate. Position 120 (E120) interacts with Mg(2+). The active-site Proton acceptor is the E187.

It belongs to the PanB family. In terms of assembly, homodecamer; pentamer of dimers. Requires Mg(2+) as cofactor.

The protein localises to the cytoplasm. The catalysed reaction is 3-methyl-2-oxobutanoate + (6R)-5,10-methylene-5,6,7,8-tetrahydrofolate + H2O = 2-dehydropantoate + (6S)-5,6,7,8-tetrahydrofolate. The protein operates within cofactor biosynthesis; (R)-pantothenate biosynthesis; (R)-pantoate from 3-methyl-2-oxobutanoate: step 1/2. In terms of biological role, catalyzes the reversible reaction in which hydroxymethyl group from 5,10-methylenetetrahydrofolate is transferred onto alpha-ketoisovalerate to form ketopantoate. The protein is 3-methyl-2-oxobutanoate hydroxymethyltransferase of Nitrobacter winogradskyi (strain ATCC 25391 / DSM 10237 / CIP 104748 / NCIMB 11846 / Nb-255).